A 698-amino-acid chain; its full sequence is Putative transposon gamma-delta 80.3 kDa protein (698 aa).

This chain is Putative transposon gamma-delta 80.3 kDa protein (tnpX), found in Escherichia coli (strain K12).